The sequence spans 534 residues: Blue-light-activated protein (534 aa).

The region spanning 20–93 (GKDIFFAAVE…QSIRDAIDQR (74 aa)) is the PAS domain. S-4a-FMN cysteine is present on Cys-70. The 55-residue stretch at 94–148 (VDISTEILNYRKDGSSFWNALFISPVYNDAGELIYFFASQLDISRRRDAEEALRQ) folds into the PAC domain. Residues 161 to 390 (GIAHDFNNLL…TLRLYFPVDE (230 aa)) form the Histidine kinase domain. His-164 is subject to Phosphohistidine; by autocatalysis. Positions 411 to 527 (RILIVEDRPD…DLARKVRQVL (117 aa)) constitute a Response regulatory domain. Asp-461 carries the 4-aspartylphosphate modification.

Post-translationally, FMN binds covalently to cysteine after exposure to blue light and this bond is spontaneously broken in the dark.

The catalysed reaction is ATP + protein L-histidine = ADP + protein N-phospho-L-histidine.. Its function is as follows. Photosensitive kinase and response regulator that is involved in increased bacterial virulence upon exposure to light. The polypeptide is Blue-light-activated protein (Pseudomonas syringae pv. syringae (strain B728a)).